The primary structure comprises 137 residues: Basic phospholipase A2 beta-bungarotoxin A5 chain (137 aa).

A signal peptide spans 1 to 9 (AVCVSLLGA). Positions 10–17 (ANIPPQHL) are excised as a propeptide. 6 cysteine pairs are disulfide-bonded: cysteine 44–cysteine 136, cysteine 46–cysteine 62, cysteine 61–cysteine 117, cysteine 68–cysteine 110, cysteine 78–cysteine 103, and cysteine 96–cysteine 108. Residues tyrosine 45, glycine 47, and glycine 49 each contribute to the Ca(2+) site. Histidine 65 is a catalytic residue. Ca(2+) is bound at residue aspartate 66. Aspartate 111 is an active-site residue.

The protein belongs to the phospholipase A2 family. Group I subfamily. D49 sub-subfamily. In terms of assembly, heterodimer; disulfide-linked. The A chains have phospholipase A2 activity and the B chains show homology with the basic protease inhibitors. It depends on Ca(2+) as a cofactor. As to expression, expressed by the venom gland.

It localises to the secreted. The enzyme catalyses a 1,2-diacyl-sn-glycero-3-phosphocholine + H2O = a 1-acyl-sn-glycero-3-phosphocholine + a fatty acid + H(+). Snake venom phospholipase A2 (PLA2) that inhibits neuromuscular transmission by blocking acetylcholine release from the nerve termini. PLA2 catalyzes the calcium-dependent hydrolysis of the 2-acyl groups in 3-sn-phosphoglycerides. The chain is Basic phospholipase A2 beta-bungarotoxin A5 chain from Bungarus multicinctus (Many-banded krait).